The chain runs to 50 residues: Sperm protamine P1 (50 aa).

The protein belongs to the protamine P1 family. Testis.

The protein resides in the nucleus. It is found in the chromosome. In terms of biological role, protamines substitute for histones in the chromatin of sperm during the haploid phase of spermatogenesis. They compact sperm DNA into a highly condensed, stable and inactive complex. The protein is Sperm protamine P1 (PRM1) of Trachypithecus phayrei (Phayre's leaf monkey).